Consider the following 237-residue polypeptide: Ribosomal RNA small subunit methyltransferase G (237 aa).

S-adenosyl-L-methionine is bound by residues Gly79, 130–131 (CE), and Arg147.

Belongs to the methyltransferase superfamily. RNA methyltransferase RsmG family.

Its subcellular location is the cytoplasm. In terms of biological role, specifically methylates the N7 position of a guanine in 16S rRNA. In Malacoplasma penetrans (strain HF-2) (Mycoplasma penetrans), this protein is Ribosomal RNA small subunit methyltransferase G.